Reading from the N-terminus, the 133-residue chain is Ubiquitin-like FUBI-ribosomal protein eS30 fusion protein (133 aa).

Positions 84 to 110 (GKVRGQTPKVAKQEKKKKKTGRAKRRM) are disordered. Over residues 97-110 (EKKKKKTGRAKRRM) the composition is skewed to basic residues. Residue lysine 125 is modified to N6-succinyllysine.

This sequence in the N-terminal section; belongs to the ubiquitin family. The protein in the C-terminal section; belongs to the eukaryotic ribosomal protein eS30 family. As to quaternary structure, component of the 40S subunit of the ribosome. FUBI is cleaved from ribosomal protein S30 by the deubiquitinase USP36 before the assembly of ribosomal protein S30 into pre-40S ribosomal particles. FUBI removal from ribosomal protein S30 is a crucial event for the final maturation of pre-40S particles.

Its subcellular location is the nucleus. The protein resides in the cytoplasm. In terms of biological role, may have pro-apoptotic activity. Component of the 40S subunit of the ribosome. Contributes to the assembly and function of 40S ribosomal subunits. The sequence is that of Ubiquitin-like FUBI-ribosomal protein eS30 fusion protein (Fau) from Mus musculus (Mouse).